A 406-amino-acid chain; its full sequence is Imidazolonepropionase (406 aa).

Fe(3+)-binding residues include histidine 67 and histidine 69. 2 residues coordinate Zn(2+): histidine 67 and histidine 69. 4-imidazolone-5-propanoate contacts are provided by arginine 76, tyrosine 139, and histidine 172. Tyrosine 139 is an N-formimidoyl-L-glutamate binding site. Histidine 237 serves as a coordination point for Fe(3+). Histidine 237 is a Zn(2+) binding site. Residue glutamine 240 coordinates 4-imidazolone-5-propanoate. Aspartate 312 provides a ligand contact to Fe(3+). Aspartate 312 provides a ligand contact to Zn(2+). Positions 314 and 316 each coordinate N-formimidoyl-L-glutamate. Threonine 317 is a 4-imidazolone-5-propanoate binding site.

It belongs to the metallo-dependent hydrolases superfamily. HutI family. The cofactor is Zn(2+). Requires Fe(3+) as cofactor.

Its subcellular location is the cytoplasm. The enzyme catalyses 4-imidazolone-5-propanoate + H2O = N-formimidoyl-L-glutamate. It participates in amino-acid degradation; L-histidine degradation into L-glutamate; N-formimidoyl-L-glutamate from L-histidine: step 3/3. Catalyzes the hydrolytic cleavage of the carbon-nitrogen bond in imidazolone-5-propanoate to yield N-formimidoyl-L-glutamate. It is the third step in the universal histidine degradation pathway. The chain is Imidazolonepropionase from Paraburkholderia phymatum (strain DSM 17167 / CIP 108236 / LMG 21445 / STM815) (Burkholderia phymatum).